Reading from the N-terminus, the 510-residue chain is 2,3-bisphosphoglycerate-independent phosphoglycerate mutase (510 aa).

The Mn(2+) site is built by D13 and S63. S63 serves as the catalytic Phosphoserine intermediate. Substrate is bound by residues H124, 154–155, R186, R192, 262–265, and K334; these read RD and RADR. Residues D401, H405, D442, H443, and H461 each contribute to the Mn(2+) site.

This sequence belongs to the BPG-independent phosphoglycerate mutase family. Monomer. Mn(2+) is required as a cofactor.

It catalyses the reaction (2R)-2-phosphoglycerate = (2R)-3-phosphoglycerate. The protein operates within carbohydrate degradation; glycolysis; pyruvate from D-glyceraldehyde 3-phosphate: step 3/5. Catalyzes the interconversion of 2-phosphoglycerate and 3-phosphoglycerate. The sequence is that of 2,3-bisphosphoglycerate-independent phosphoglycerate mutase from Vibrio campbellii (strain ATCC BAA-1116).